A 165-amino-acid polypeptide reads, in one-letter code: Anaerobic nitrite reductase GLB1 (165 aa).

Residues V12–K162 enclose the Globin domain. Residues E45 to S49 carry the Homodimerization motif. Residues S55, K69, H73, R103, T107, and H108 each contribute to the heme b site. The Homodimerization signature appears at D115–E127.

It belongs to the plant globin family. Homodimer. Heme b is required as a cofactor. In terms of tissue distribution, in vegetative but not in embryonic organs.

The protein localises to the cytoplasm. Its subcellular location is the nucleus. The enzyme catalyses Fe(III)-heme b-[protein] + nitric oxide + H2O = Fe(II)-heme b-[protein] + nitrite + 2 H(+). In terms of biological role, phytoglobin that reduces nitrite to nitric oxide (NO) under anoxic conditions (e.g. during flooding or in waterlogged soil). May not function as an oxygen storage or transport protein. Has an unusually high affinity for O(2) through an hexacoordinate heme iron because of a very low dissociation constant. This Zea mays subsp. parviglumis (Balsas teosinte) protein is Anaerobic nitrite reductase GLB1 (HB).